We begin with the raw amino-acid sequence, 584 residues long: uncharacterized protein (584 aa).

PbH1 repeat units follow at residues 100 to 128, 139 to 161, 173 to 195, 196 to 225, 236 to 266, 313 to 333, 334 to 356, 357 to 382, 406 to 427, 456 to 478, and 529 to 554; these read QENI…RSTH, CSNV…IVSP, SEQI…SITG, CDMV…DIEG, PINV…LIEG, TSDA…IDVR, GKSV…LVYQ, SSDV…GLRA, GGNM…WIAQ, NAGA…YCST, and SAGS…QTNT.

This is an uncharacterized protein from Bacillus subtilis (strain 168).